The chain runs to 418 residues: Tyrosine--tRNA ligase (418 aa).

Y34 is a binding site for L-tyrosine. The short motif at 39 to 48 (PTADSLHLGH) is the 'HIGH' region element. L-tyrosine is bound by residues Y169 and Q173. The short motif at 229–233 (KFGKS) is the 'KMSKS' region element. Residue K232 participates in ATP binding. The S4 RNA-binding domain occupies 352–418 (LNLVDMLVTA…GKKKYAVLTY (67 aa)).

It belongs to the class-I aminoacyl-tRNA synthetase family. TyrS type 1 subfamily. As to quaternary structure, homodimer.

The protein localises to the cytoplasm. It catalyses the reaction tRNA(Tyr) + L-tyrosine + ATP = L-tyrosyl-tRNA(Tyr) + AMP + diphosphate + H(+). Catalyzes the attachment of tyrosine to tRNA(Tyr) in a two-step reaction: tyrosine is first activated by ATP to form Tyr-AMP and then transferred to the acceptor end of tRNA(Tyr). The protein is Tyrosine--tRNA ligase of Streptococcus pyogenes serotype M28 (strain MGAS6180).